The sequence spans 463 residues: 23S rRNA (uracil(1939)-C(5))-methyltransferase RlmD (463 aa).

One can recognise a TRAM domain in the interval 6-76 (KSRKPQQPEY…KRLEEAEMVE (71 aa)). 4 residues coordinate [4Fe-4S] cluster: C90, C96, C99, and C178. S-adenosyl-L-methionine is bound by residues Q288, F317, N322, E341, D368, and D389. The Nucleophile role is filled by C415.

It belongs to the class I-like SAM-binding methyltransferase superfamily. RNA M5U methyltransferase family. RlmD subfamily.

It catalyses the reaction uridine(1939) in 23S rRNA + S-adenosyl-L-methionine = 5-methyluridine(1939) in 23S rRNA + S-adenosyl-L-homocysteine + H(+). Functionally, catalyzes the formation of 5-methyl-uridine at position 1939 (m5U1939) in 23S rRNA. This chain is 23S rRNA (uracil(1939)-C(5))-methyltransferase RlmD, found in Acinetobacter baumannii (strain AYE).